A 185-amino-acid polypeptide reads, in one-letter code: Meiotic expression up-regulated protein 31 (185 aa).

In Schizosaccharomyces pombe (strain 972 / ATCC 24843) (Fission yeast), this protein is Meiotic expression up-regulated protein 31 (meu31).